Consider the following 109-residue polypeptide: Putative antitoxin HigA3 (109 aa).

The HTH cro/C1-type domain maps to 41 to 97; sequence LAEIRKALGHARQADVAALMGVSQARVSKLESGDLSHTELGTLQAYVAALGGHLRIV. A DNA-binding region (H-T-H motif) is located at residues 53–72; it reads QADVAALMGVSQARVSKLES.

In terms of biological role, putative antitoxin component of a type II toxin-antitoxin (TA) system. Its cognate toxin would be HigB3. The protein is Putative antitoxin HigA3 of Mycobacterium tuberculosis (strain ATCC 25618 / H37Rv).